Here is a 157-residue protein sequence, read N- to C-terminus: Urease accessory protein UreE (157 aa).

The protein belongs to the UreE family.

The protein resides in the cytoplasm. Its function is as follows. Involved in urease metallocenter assembly. Binds nickel. Probably functions as a nickel donor during metallocenter assembly. In Paenarthrobacter aurescens (strain TC1), this protein is Urease accessory protein UreE.